A 132-amino-acid chain; its full sequence is Small ribosomal subunit protein uS8 (132 aa).

This sequence belongs to the universal ribosomal protein uS8 family. In terms of assembly, part of the 30S ribosomal subunit. Contacts proteins S5 and S12.

Its function is as follows. One of the primary rRNA binding proteins, it binds directly to 16S rRNA central domain where it helps coordinate assembly of the platform of the 30S subunit. The sequence is that of Small ribosomal subunit protein uS8 from Psychrobacter sp. (strain PRwf-1).